Here is a 405-residue protein sequence, read N- to C-terminus: Putative arsenical pump-driving ATPase (405 aa).

8 to 15 (GKGGVGKT) contacts ATP.

Belongs to the arsA ATPase family.

It catalyses the reaction arsenite(in) + ATP + H2O = arsenite(out) + ADP + phosphate + H(+). In terms of biological role, anion-transporting ATPase. Catalyzes the extrusion of arsenite. The protein is Putative arsenical pump-driving ATPase of Prosthecochloris vibrioformis (Chlorobium vibrioforme).